A 351-amino-acid chain; its full sequence is Biotin synthase (351 aa).

One can recognise a Radical SAM core domain in the interval 44–262 (NRVQVSTLLS…LAVARILMPQ (219 aa)). Residues Cys59, Cys63, and Cys66 each contribute to the [4Fe-4S] cluster site. [2Fe-2S] cluster contacts are provided by Cys103, Cys134, Cys194, and Arg266.

Belongs to the radical SAM superfamily. Biotin synthase family. In terms of assembly, homodimer. It depends on [4Fe-4S] cluster as a cofactor. The cofactor is [2Fe-2S] cluster.

It carries out the reaction (4R,5S)-dethiobiotin + (sulfur carrier)-SH + 2 reduced [2Fe-2S]-[ferredoxin] + 2 S-adenosyl-L-methionine = (sulfur carrier)-H + biotin + 2 5'-deoxyadenosine + 2 L-methionine + 2 oxidized [2Fe-2S]-[ferredoxin]. It functions in the pathway cofactor biosynthesis; biotin biosynthesis; biotin from 7,8-diaminononanoate: step 2/2. Functionally, catalyzes the conversion of dethiobiotin (DTB) to biotin by the insertion of a sulfur atom into dethiobiotin via a radical-based mechanism. This chain is Biotin synthase, found in Pseudomonas fluorescens (strain ATCC BAA-477 / NRRL B-23932 / Pf-5).